We begin with the raw amino-acid sequence, 38 residues long: Potassium channel toxin alpha-KTx 2.13 (38 aa).

Cystine bridges form between Cys7–Cys29, Cys13–Cys34, and Cys17–Cys36.

The protein belongs to the short scorpion toxin superfamily. Potassium channel inhibitor family. Alpha-KTx 02 subfamily. As to expression, expressed by the venom gland.

The protein localises to the secreted. Its function is as follows. Selective inhibitor of voltage-gated potassium channels, blocks the Kv1.2/KCNA2 (Kd=1.3 nM) and Kv1.3/KCNA3 (Kd=7.2 nM) channels. Association and dissociation rates of the toxin are slower for Kv1.2/KCNA2 than for Kv1.3/KCNA3. The chain is Potassium channel toxin alpha-KTx 2.13 from Centruroides suffusus (Durango bark scorpion).